We begin with the raw amino-acid sequence, 359 residues long: DNA replication and repair protein RecF (359 aa).

30 to 37 contacts ATP; it reads GQNAQGKT.

This sequence belongs to the RecF family.

It localises to the cytoplasm. Functionally, the RecF protein is involved in DNA metabolism; it is required for DNA replication and normal SOS inducibility. RecF binds preferentially to single-stranded, linear DNA. It also seems to bind ATP. The chain is DNA replication and repair protein RecF from Lactococcus lactis subsp. cremoris (strain SK11).